Here is a 319-residue protein sequence, read N- to C-terminus: ATP-dependent 6-phosphofructokinase (319 aa).

Gly11 serves as a coordination point for ATP. 21-25 (RAVVR) lines the ADP pocket. Residues 72–73 (RC) and 102–105 (GDGS) contribute to the ATP site. Asp103 is a binding site for Mg(2+). A substrate-binding site is contributed by 125–127 (TID). Catalysis depends on Asp127, which acts as the Proton acceptor. Residue Arg154 coordinates ADP. Residues Arg162 and 169–171 (MGR) each bind substrate. ADP contacts are provided by residues 185 to 187 (GAE), Arg211, and 213 to 215 (KKH). Residues Glu222, Arg243, and 249–252 (HMQR) contribute to the substrate site.

This sequence belongs to the phosphofructokinase type A (PFKA) family. ATP-dependent PFK group I subfamily. Prokaryotic clade 'B1' sub-subfamily. Homotetramer. Mg(2+) serves as cofactor.

The protein resides in the cytoplasm. It carries out the reaction beta-D-fructose 6-phosphate + ATP = beta-D-fructose 1,6-bisphosphate + ADP + H(+). It participates in carbohydrate degradation; glycolysis; D-glyceraldehyde 3-phosphate and glycerone phosphate from D-glucose: step 3/4. Its activity is regulated as follows. Allosterically activated by ADP and other diphosphonucleosides, and allosterically inhibited by phosphoenolpyruvate. In terms of biological role, catalyzes the phosphorylation of D-fructose 6-phosphate to fructose 1,6-bisphosphate by ATP, the first committing step of glycolysis. This is ATP-dependent 6-phosphofructokinase from Macrococcus caseolyticus (strain JCSC5402) (Macrococcoides caseolyticum).